The following is a 443-amino-acid chain: D-serine dehydratase (443 aa).

Lys-118 is subject to N6-(pyridoxal phosphate)lysine.

It belongs to the serine/threonine dehydratase family. DsdA subfamily. Monomer. It depends on pyridoxal 5'-phosphate as a cofactor.

The enzyme catalyses D-serine = pyruvate + NH4(+). In Photorhabdus laumondii subsp. laumondii (strain DSM 15139 / CIP 105565 / TT01) (Photorhabdus luminescens subsp. laumondii), this protein is D-serine dehydratase.